The sequence spans 44 residues: Photosystem I reaction center subunit IX (44 aa).

Residues 7 to 27 form a helical membrane-spanning segment; that stretch reads YLSVAPVVSTLWFAALAGLLI.

The protein belongs to the PsaJ family.

Its subcellular location is the plastid. The protein localises to the chloroplast thylakoid membrane. Its function is as follows. May help in the organization of the PsaE and PsaF subunits. This Lotus japonicus (Lotus corniculatus var. japonicus) protein is Photosystem I reaction center subunit IX.